A 167-amino-acid polypeptide reads, in one-letter code: Endoribonuclease YbeY (167 aa).

Histidine 131, histidine 135, and histidine 141 together coordinate Zn(2+).

It belongs to the endoribonuclease YbeY family. Requires Zn(2+) as cofactor.

It localises to the cytoplasm. Functionally, single strand-specific metallo-endoribonuclease involved in late-stage 70S ribosome quality control and in maturation of the 3' terminus of the 16S rRNA. The protein is Endoribonuclease YbeY of Rickettsia prowazekii (strain Madrid E).